The primary structure comprises 191 residues: Casparian strip membrane protein 4 (191 aa).

Residues 1 to 27 (MKTGSVEAGEQASEDATPRRGKKLNRG) are Cytoplasmic-facing. A helical transmembrane segment spans residues 28 to 48 (ILILDLVLRVFGAICTLGSAV). Residues 49-72 (AMGTTSQTLPSSSQFFRFRAKYND) lie on the Extracellular side of the membrane. A helical transmembrane segment spans residues 73–93 (LPMFMFFAIANSIVCAYLVLS). Topologically, residues 94 to 110 (LRLSIFHIIRSAGIITR) are cytoplasmic. The helical transmembrane segment at 111-131 (IILVTFDMVMLVLLTCGASAA) threads the bilayer. Topologically, residues 132 to 160 (TSIVYLAHKGNASANWLPFCVRFSHFCNR) are extracellular. An N-linked (GlcNAc...) asparagine glycan is attached at asparagine 142. A helical membrane pass occupies residues 161-181 (ISGSLIGSFFSIIIFMLLVIL). Residues 182–191 (SAVSQFSICN) are Cytoplasmic-facing.

This sequence belongs to the Casparian strip membrane proteins (CASP) family. As to quaternary structure, homodimer and heterodimers.

The protein localises to the cell membrane. Regulates membrane-cell wall junctions and localized cell wall deposition. Required for establishment of the Casparian strip membrane domain (CSD) and the subsequent formation of Casparian strips, a cell wall modification of the root endodermis that determines an apoplastic barrier between the intraorganismal apoplasm and the extraorganismal apoplasm and prevents lateral diffusion. The polypeptide is Casparian strip membrane protein 4 (Ricinus communis (Castor bean)).